The following is a 247-amino-acid chain: tRNA pseudouridine synthase A (247 aa).

Residue Asp-52 is the Nucleophile of the active site. Tyr-113 contacts substrate.

It belongs to the tRNA pseudouridine synthase TruA family. Homodimer.

The catalysed reaction is uridine(38/39/40) in tRNA = pseudouridine(38/39/40) in tRNA. Formation of pseudouridine at positions 38, 39 and 40 in the anticodon stem and loop of transfer RNAs. This Bartonella henselae (strain ATCC 49882 / DSM 28221 / CCUG 30454 / Houston 1) (Rochalimaea henselae) protein is tRNA pseudouridine synthase A.